The primary structure comprises 380 residues: Cytochrome b (380 aa).

4 consecutive transmembrane segments (helical) span residues 34–54 (FGSL…LLAM), 78–99 (WLIR…YMHI), 114–134 (WNTG…GYVL), and 179–199 (FFAL…IHLT). 2 residues coordinate heme b: His-84 and His-98. Positions 183 and 197 each coordinate heme b. His-202 serves as a coordination point for a ubiquinone. 4 consecutive transmembrane segments (helical) span residues 227-247 (SKDI…ALFS), 289-309 (LGGV…PFLH), 321-341 (LSQM…WIGS), and 348-368 (FIII…ILLP).

Belongs to the cytochrome b family. As to quaternary structure, the cytochrome bc1 complex contains 11 subunits: 3 respiratory subunits (MT-CYB, CYC1 and UQCRFS1), 2 core proteins (UQCRC1 and UQCRC2) and 6 low-molecular weight proteins (UQCRH/QCR6, UQCRB/QCR7, UQCRQ/QCR8, UQCR10/QCR9, UQCR11/QCR10 and a cleavage product of UQCRFS1). This cytochrome bc1 complex then forms a dimer. Requires heme b as cofactor.

The protein localises to the mitochondrion inner membrane. Functionally, component of the ubiquinol-cytochrome c reductase complex (complex III or cytochrome b-c1 complex) that is part of the mitochondrial respiratory chain. The b-c1 complex mediates electron transfer from ubiquinol to cytochrome c. Contributes to the generation of a proton gradient across the mitochondrial membrane that is then used for ATP synthesis. The chain is Cytochrome b (MT-CYB) from Caracara plancus (Southern caracara).